We begin with the raw amino-acid sequence, 33 residues long: Gastrin (33 aa).

Residues Q1 and Q18 each carry the pyrrolidone carboxylic acid modification. At Y28 the chain carries Sulfotyrosine. F33 is subject to Phenylalanine amide.

Belongs to the gastrin/cholecystokinin family.

The protein resides in the secreted. Functionally, gastrin stimulates the stomach mucosa to produce and secrete hydrochloric acid and the pancreas to secrete its digestive enzymes. It also stimulates smooth muscle contraction and increases blood circulation and water secretion in the stomach and intestine. This Didelphis virginiana (North American opossum) protein is Gastrin (GAST).